A 143-amino-acid polypeptide reads, in one-letter code: Large ribosomal subunit protein uL15 (143 aa).

The tract at residues 1-59 (MELNGIKPADGAKHYKRRVGRGIGSGIGKTAGRGHKGQKSRAGGYHKVGFEGGQMPMQR) is disordered. Gly residues predominate over residues 21–31 (RGIGSGIGKTA).

This sequence belongs to the universal ribosomal protein uL15 family. As to quaternary structure, part of the 50S ribosomal subunit.

Binds to the 23S rRNA. This chain is Large ribosomal subunit protein uL15, found in Albidiferax ferrireducens (strain ATCC BAA-621 / DSM 15236 / T118) (Rhodoferax ferrireducens).